Reading from the N-terminus, the 373-residue chain is Lipoyl synthase (373 aa).

Residues 12 to 36 (HVVSNDHPSSSPLQPGVKQSGEDKI) form a disordered region. [4Fe-4S] cluster contacts are provided by cysteine 81, cysteine 86, cysteine 92, cysteine 107, cysteine 111, cysteine 114, and serine 323. The 220-residue stretch at 93–312 (FSHGTATFMI…EEYGMALGFS (220 aa)) folds into the Radical SAM core domain. A disordered region spans residues 346-373 (PAVSSTEHRERHTIASKSASKTESIRHR).

The protein belongs to the radical SAM superfamily. Lipoyl synthase family. [4Fe-4S] cluster serves as cofactor.

It is found in the cytoplasm. The catalysed reaction is [[Fe-S] cluster scaffold protein carrying a second [4Fe-4S](2+) cluster] + N(6)-octanoyl-L-lysyl-[protein] + 2 oxidized [2Fe-2S]-[ferredoxin] + 2 S-adenosyl-L-methionine + 4 H(+) = [[Fe-S] cluster scaffold protein] + N(6)-[(R)-dihydrolipoyl]-L-lysyl-[protein] + 4 Fe(3+) + 2 hydrogen sulfide + 2 5'-deoxyadenosine + 2 L-methionine + 2 reduced [2Fe-2S]-[ferredoxin]. It functions in the pathway protein modification; protein lipoylation via endogenous pathway; protein N(6)-(lipoyl)lysine from octanoyl-[acyl-carrier-protein]: step 2/2. Catalyzes the radical-mediated insertion of two sulfur atoms into the C-6 and C-8 positions of the octanoyl moiety bound to the lipoyl domains of lipoate-dependent enzymes, thereby converting the octanoylated domains into lipoylated derivatives. This chain is Lipoyl synthase, found in Xylella fastidiosa (strain 9a5c).